The chain runs to 570 residues: La-related protein 7 (570 aa).

N-acetylmethionine is present on Met1. Basic and acidic residues predominate over residues 1–16 (METENQKTMEESTKRK). 2 disordered regions span residues 1–24 (METENQKTMEESTKRKEEKKKRSR) and 180–364 (LNNP…ERHK). Positions 22 to 116 (RSRVKQVLAD…KPLGERPKDE (95 aa)) constitute an HTH La-type RNA-binding domain. The RRM domain maps to 119–197 (RTVYVELLPK…PRKPGIFPKT (79 aa)). Positions 213 to 222 (KKKKKKKGRI) are enriched in basic residues. Residue Lys231 forms a Glycyl lysine isopeptide (Lys-Gly) (interchain with G-Cter in SUMO2) linkage. Thr251 bears the Phosphothreonine mark. Residues Ser253 and Ser256 each carry the phosphoserine modification. Phosphothreonine is present on Thr260. Over residues 286–295 (RAGKRERCSA) the composition is skewed to basic and acidic residues. Ser294 and Ser334 each carry phosphoserine. Position 335 is a phosphothreonine (Thr335). Residues 340 to 349 (ETDRKGDSLS) show a composition bias toward basic and acidic residues. Position 347 is a phosphoserine (Ser347). Residues 350 to 363 (KVKRKHKKKHKERH) are compositionally biased toward basic residues. Residue Lys406 forms a Glycyl lysine isopeptide (Lys-Gly) (interchain with G-Cter in SUMO2) linkage. Residues 438–551 (QFVTGVIVKI…TEKLITKAEK (114 aa)) form the xRRM domain.

It belongs to the LARP7 family. Core component of the 7SK RNP complex, at least composed of 7SK RNA, LARP7, MEPCE, HEXIM1 (or HEXIM2) and P-TEFb (composed of CDK9 and CCNT1/cyclin-T1). Interacts with METTL16. Interacts with RBM7; upon genotoxic stress this interaction is enhanced, triggering the release of inactive P-TEFb complex from the core, yielding to P-TEFb complex activation. Associates with box C/D small nucleolar ribonucleoprotein (snoRNP) complexes.

Its subcellular location is the nucleus. It is found in the nucleoplasm. RNA-binding protein that specifically binds distinct small nuclear RNA (snRNAs) and regulates their processing and function. Specifically binds the 7SK snRNA (7SK RNA) and acts as a core component of the 7SK ribonucleoprotein (RNP) complex, thereby acting as a negative regulator of transcription elongation by RNA polymerase II. The 7SK RNP complex sequesters the positive transcription elongation factor b (P-TEFb) in a large inactive 7SK RNP complex preventing RNA polymerase II phosphorylation and subsequent transcriptional elongation. The 7SK RNP complex also promotes snRNA gene transcription by RNA polymerase II via interaction with the little elongation complex (LEC). LARP7 specifically binds to the highly conserved 3'-terminal U-rich stretch of 7SK RNA; on stimulation, remains associated with 7SK RNA, whereas P-TEFb is released from the complex. LARP7 also acts as a regulator of mRNA splicing fidelity by promoting U6 snRNA processing. Specifically binds U6 snRNAs and associates with a subset of box C/D RNP complexes: promotes U6 snRNA 2'-O-methylation by facilitating U6 snRNA loading into box C/D RNP complexes. U6 snRNA 2'-O-methylation is required for mRNA splicing fidelity. Binds U6 snRNAs with a 5'-CAGGG-3' sequence motif. U6 snRNA processing is required for spermatogenesis. This Mus musculus (Mouse) protein is La-related protein 7.